A 35-amino-acid chain; its full sequence is Photosystem II reaction center protein M (35 aa).

Residues 5–25 (ILAFIATALFILVPTAFLLII) form a helical membrane-spanning segment.

The protein belongs to the PsbM family. In terms of assembly, PSII is composed of 1 copy each of membrane proteins PsbA, PsbB, PsbC, PsbD, PsbE, PsbF, PsbH, PsbI, PsbJ, PsbK, PsbL, PsbM, PsbT, PsbX, PsbY, PsbZ, Psb30/Ycf12, at least 3 peripheral proteins of the oxygen-evolving complex and a large number of cofactors. It forms dimeric complexes.

Its subcellular location is the plastid. The protein resides in the chloroplast thylakoid membrane. Its function is as follows. One of the components of the core complex of photosystem II (PSII). PSII is a light-driven water:plastoquinone oxidoreductase that uses light energy to abstract electrons from H(2)O, generating O(2) and a proton gradient subsequently used for ATP formation. It consists of a core antenna complex that captures photons, and an electron transfer chain that converts photonic excitation into a charge separation. This subunit is found at the monomer-monomer interface. This Panax quinquefolius (American ginseng) protein is Photosystem II reaction center protein M.